The following is a 436-amino-acid chain: Gamma-glutamyl phosphate reductase (436 aa).

Belongs to the gamma-glutamyl phosphate reductase family.

The protein localises to the cytoplasm. The catalysed reaction is L-glutamate 5-semialdehyde + phosphate + NADP(+) = L-glutamyl 5-phosphate + NADPH + H(+). It functions in the pathway amino-acid biosynthesis; L-proline biosynthesis; L-glutamate 5-semialdehyde from L-glutamate: step 2/2. In terms of biological role, catalyzes the NADPH-dependent reduction of L-glutamate 5-phosphate into L-glutamate 5-semialdehyde and phosphate. The product spontaneously undergoes cyclization to form 1-pyrroline-5-carboxylate. The chain is Gamma-glutamyl phosphate reductase from Prochlorococcus marinus (strain MIT 9312).